Consider the following 164-residue polypeptide: UPF0304 protein Asuc_0543 (164 aa).

This sequence belongs to the UPF0304 family.

This is UPF0304 protein Asuc_0543 from Actinobacillus succinogenes (strain ATCC 55618 / DSM 22257 / CCUG 43843 / 130Z).